Reading from the N-terminus, the 208-residue chain is Large ribosomal subunit protein bL25 (208 aa).

The protein belongs to the bacterial ribosomal protein bL25 family. CTC subfamily. Part of the 50S ribosomal subunit; part of the 5S rRNA/L5/L18/L25 subcomplex. Contacts the 5S rRNA. Binds to the 5S rRNA independently of L5 and L18.

This is one of the proteins that binds to the 5S RNA in the ribosome where it forms part of the central protuberance. The sequence is that of Large ribosomal subunit protein bL25 from Leptothrix cholodnii (strain ATCC 51168 / LMG 8142 / SP-6) (Leptothrix discophora (strain SP-6)).